The primary structure comprises 313 residues: Porphobilinogen deaminase (313 aa).

C242 carries the post-translational modification S-(dipyrrolylmethanemethyl)cysteine.

The protein belongs to the HMBS family. Monomer. It depends on dipyrromethane as a cofactor.

It carries out the reaction 4 porphobilinogen + H2O = hydroxymethylbilane + 4 NH4(+). It participates in porphyrin-containing compound metabolism; protoporphyrin-IX biosynthesis; coproporphyrinogen-III from 5-aminolevulinate: step 2/4. Its function is as follows. Tetrapolymerization of the monopyrrole PBG into the hydroxymethylbilane pre-uroporphyrinogen in several discrete steps. The polypeptide is Porphobilinogen deaminase (Pseudomonas putida (strain W619)).